We begin with the raw amino-acid sequence, 372 residues long: Hydrogenase-2 small chain (372 aa).

A signal peptide (tat-type signal) is located at residues 1–37 (MTGDNTLIHSHGINRRDFMKLCAALAATMGLSSKAAA). [4Fe-4S] cluster contacts are provided by C59, C62, C157, C191, H229, C232, C257, and C263. 3 residues coordinate [3Fe-4S] cluster: C272, C292, and C295.

This sequence belongs to the [NiFe]/[NiFeSe] hydrogenase small subunit family. As to quaternary structure, heterodimer of a large and a small subunit. [4Fe-4S] cluster is required as a cofactor. [3Fe-4S] cluster serves as cofactor. Predicted to be exported by the Tat system. The position of the signal peptide cleavage has not been experimentally proven.

Its subcellular location is the cell membrane. The protein resides in the periplasm. The enzyme catalyses H2 + A = AH2. Functionally, this is one of three E.coli hydrogenases synthesized in response to different physiological conditions. HYD2 is involved in hydrogen uptake. The chain is Hydrogenase-2 small chain (hybO) from Escherichia coli O157:H7.